Here is a 414-residue protein sequence, read N- to C-terminus: Imidazolonepropionase (414 aa).

The Fe(3+) site is built by histidine 73 and histidine 75. 2 residues coordinate Zn(2+): histidine 73 and histidine 75. 4-imidazolone-5-propanoate-binding residues include arginine 82, tyrosine 145, and histidine 178. Tyrosine 145 contributes to the N-formimidoyl-L-glutamate binding site. A Fe(3+)-binding site is contributed by histidine 249. Histidine 249 is a Zn(2+) binding site. Residue glutamine 252 coordinates 4-imidazolone-5-propanoate. Aspartate 324 contributes to the Fe(3+) binding site. A Zn(2+)-binding site is contributed by aspartate 324. Asparagine 326 and glycine 328 together coordinate N-formimidoyl-L-glutamate. Residue serine 329 participates in 4-imidazolone-5-propanoate binding.

The protein belongs to the metallo-dependent hydrolases superfamily. HutI family. The cofactor is Zn(2+). It depends on Fe(3+) as a cofactor.

The protein localises to the cytoplasm. The enzyme catalyses 4-imidazolone-5-propanoate + H2O = N-formimidoyl-L-glutamate. Its pathway is amino-acid degradation; L-histidine degradation into L-glutamate; N-formimidoyl-L-glutamate from L-histidine: step 3/3. Its function is as follows. Catalyzes the hydrolytic cleavage of the carbon-nitrogen bond in imidazolone-5-propanoate to yield N-formimidoyl-L-glutamate. It is the third step in the universal histidine degradation pathway. The chain is Imidazolonepropionase from Shewanella pealeana (strain ATCC 700345 / ANG-SQ1).